A 192-amino-acid polypeptide reads, in one-letter code: Xanthine phosphoribosyltransferase (192 aa).

Residues Leu-20 and Asn-27 each coordinate xanthine. 128 to 132 is a binding site for 5-phospho-alpha-D-ribose 1-diphosphate; the sequence is ANGDA. Lys-156 is a binding site for xanthine.

It belongs to the purine/pyrimidine phosphoribosyltransferase family. Xpt subfamily. Homodimer.

It localises to the cytoplasm. The enzyme catalyses XMP + diphosphate = xanthine + 5-phospho-alpha-D-ribose 1-diphosphate. It functions in the pathway purine metabolism; XMP biosynthesis via salvage pathway; XMP from xanthine: step 1/1. Its function is as follows. Converts the preformed base xanthine, a product of nucleic acid breakdown, to xanthosine 5'-monophosphate (XMP), so it can be reused for RNA or DNA synthesis. The protein is Xanthine phosphoribosyltransferase of Staphylococcus epidermidis (strain ATCC 35984 / DSM 28319 / BCRC 17069 / CCUG 31568 / BM 3577 / RP62A).